Here is a 510-residue protein sequence, read N- to C-terminus: Putative folylpolyglutamate synthase (510 aa).

98–101 (GKGS) serves as a coordination point for ATP. The Mg(2+) site is built by S122, E189, and H217. Residues R342 and D357 each contribute to the ATP site.

This sequence belongs to the folylpolyglutamate synthase family. A monovalent cation serves as cofactor.

Its subcellular location is the mitochondrion inner membrane. The protein resides in the mitochondrion matrix. The protein localises to the cytoplasm. It carries out the reaction (6S)-5,6,7,8-tetrahydrofolyl-(gamma-L-Glu)(n) + L-glutamate + ATP = (6S)-5,6,7,8-tetrahydrofolyl-(gamma-L-Glu)(n+1) + ADP + phosphate + H(+). It participates in cofactor biosynthesis; tetrahydrofolylpolyglutamate biosynthesis. Catalyzes conversion of folates to polyglutamate derivatives allowing concentration of folate compounds in the cell and the intracellular retention of these cofactors, which are important substrates for most of the folate-dependent enzymes that are involved in one-carbon transfer reactions involved in purine, pyrimidine and amino acid synthesis. This is Putative folylpolyglutamate synthase from Caenorhabditis elegans.